The sequence spans 817 residues: ABC transporter G family member STR (817 aa).

The segment at 1–30 (MARLERDGTNKSLESLMDSHKPGGTTTNLN) is disordered. Residues 1-542 (MARLERDGTN…RTVLNVIRTP (542 aa)) are Cytoplasmic-facing. One can recognise an ABC transporter domain in the interval 43–294 (LEFTNLSYSI…LSGFGRPVPD (252 aa)). 87 to 94 (GPSGAGKS) provides a ligand contact to ATP. Disordered stretches follow at residues 321–349 (QYQH…RRNT), 362–395 (GFTA…LERR), and 439–463 (RPPS…GPRS). The segment covering 362–375 (GFTAGTPQPDSSQF) has biased composition (polar residues). Acidic residues predominate over residues 377–388 (LDDDDNDDDENF). The chain crosses the membrane as a helical span at residues 543–563 (ELFASREIVLTVMALVLSTIF). The Extracellular segment spans residues 564-579 (KNLGDTTFIDINRLLN). Residues 580–600 (FYIFAVCLVFFSSNDAVPSFI) form a helical membrane-spanning segment. Residues 601–621 (MERFIFIRETSHNAYRASSYV) are Cytoplasmic-facing. Residues 622–642 (ISSLIVYLPFFAVQGLTFAVI) form a helical membrane-spanning segment. Residues 643 to 657 (TKLMLHLKSNLFNFW) are Extracellular-facing. A helical transmembrane segment spans residues 658–678 (MILFASLITTNAYVMLVSALV). The Cytoplasmic segment spans residues 679-681 (PSY). The chain crosses the membrane as a helical span at residues 682–702 (ITGYAVVIATTALFFLTCGFF). Residues 703 to 787 (LKRTQIPAYW…TMDITMESLW (85 aa)) lie on the Extracellular side of the membrane. N-linked (GlcNAc...) asparagine glycosylation occurs at Asn-762. A helical transmembrane segment spans residues 788 to 808 (YDILILLAWGVLYRFFFYLVL). Residues 809 to 817 (RFYSKNERK) lie on the Cytoplasmic side of the membrane.

It belongs to the ABC transporter superfamily. ABCG family. Stunted arbuscule (STR) subfamily. As to quaternary structure, heterodimerizes with STR2; the resulting transporter is located in the peri-arbuscular membrane. In terms of tissue distribution, expressed constitutively in the vascular tissue of roots.

Its subcellular location is the cell membrane. In terms of biological role, together with STR2, required for arbuscule development in arbuscular mycorrhizal (AM) symbiosis. This is ABC transporter G family member STR from Medicago truncatula (Barrel medic).